The primary structure comprises 219 residues: Lipid transferase CIDEA (219 aa).

The 78-residue stretch at 33 to 110 (PARPFRVSNH…ILEKGQKWMP (78 aa)) folds into the CIDE-N domain. The tract at residues 163 to 180 (CTGLKGLLRSLLRFLSYS) is amphipathic helix.

The protein belongs to the CIDE family. As to quaternary structure, homodimer. Interacts with CIDEC. Directly interacts with CEBPB. Interacts with isoform CLSTN3beta of CLSTN3; inhibiting the lipid transferase activity of CIDEA. Expressed in omental and subcutaneous adipose tissue (at protein level).

The protein localises to the lipid droplet. It is found in the nucleus. The enzyme catalyses a triacyl-sn-glycerol(in) = a triacyl-sn-glycerol(out). Lipid transferase that promotes unilocular lipid droplet formation by mediating lipid droplet fusion. Lipid droplet fusion promotes their enlargement, restricting lipolysis and favoring lipid storage. Localizes on the lipid droplet surface, at focal contact sites between lipid droplets, and mediates atypical lipid droplet fusion by promoting directional net neutral lipid transfer from the smaller to larger lipid droplets. The transfer direction may be driven by the internal pressure difference between the contacting lipid droplet pair and occurs at a lower rate than that promoted by CIDEC. May also act as a CEBPB coactivator in epithelial cells to control the expression of a subset of CEBPB downstream target genes, including ID2, IGF1, PRLR, SOCS1, SOCS3, XDH, but not casein. By interacting with CEBPB, strengthens the association of CEBPB with the XDH promoter, increases histone acetylation and dissociates HDAC1 from the promoter. When overexpressed, induces apoptosis; the physiological significance of its role in apoptosis is unclear. The sequence is that of Lipid transferase CIDEA from Homo sapiens (Human).